A 519-amino-acid chain; its full sequence is MTTSAFVDDRVGVPNDVRPMTGDEYLESLRDGREVYFRGERVDDVTTHPAFRNSARSVARMYDALHQPEQEGVLAVPTDTGNGGFTHPFFKTARSADDLVLSRDAIVAWQREVYGWLGRSPDYKASFLGTLGANADFYGPYRDNALRWYKHAQERMLYLNHAIVNPPIDRDKPADETADVCVHVVEETDAGLIVSGAKVVATGSAITNANFIAHYGLLRKKEYGLIFTVPMDSPGLKLFCRTSYEMNAAVMGTPFDYPLSSRFDENDAIMVFDRVLVPWENVFAYDTDTANGFVMKSGFLSRFMFHGCARLAVKLDFIAGCVMKGVEMTGSAGFRGVQMQIGEILNWRDMFWGLSDAMAKSPEQWVNGAVQPNLNYGLAYRTFMGVGYPRVKEIIQQVLGSGLIYLNSHASDWANPAMRPYLDQYVRGSNGVAAIDRVQLLKLLWDAVGTEFGGRHELYERNYGGDHEAVRFQTLFAYQATGQDLALKGFAEQCMSEYDVDGWTRPDLIGNDDLRIVRG.

Belongs to the FADH(2)-utilizing monooxygenase family. Homotetramer. 4-nitrophenol 2-monooxygenase complex consists of an oxygenase component NphA1 and a flavin reductase component NphA2. The cofactor is FAD.

It carries out the reaction 4-nitrophenol + NADH + O2 + H(+) = 4-nitrocatechol + NAD(+) + H2O. With respect to regulation, partially inhibited by concentrations of FAD above 10 uM and completely inhibited by concentrations above 50 uM. Utilizes the flavins supplied by NphA2 to catalyze the degradation of 4-nitrophenol (4-NP) via 4-nitrocatechol (4-NC) which is used as the sole carbon, nitrogen, and energy source. Can also degrade phenol and 4-chlorophenol as rapidly as 4-NP. The protein is 4-nitrophenol 2-monooxygenase, oxygenase component (nphA1) of Rhodococcus sp.